The chain runs to 168 residues: UPF0303 protein YE1367 (168 aa).

It belongs to the UPF0303 family.

The chain is UPF0303 protein YE1367 from Yersinia enterocolitica serotype O:8 / biotype 1B (strain NCTC 13174 / 8081).